A 249-amino-acid polypeptide reads, in one-letter code: Triosephosphate isomerase (249 aa).

2 residues coordinate substrate: N12 and K14. N6-acetyllysine is present on K14. Y68 is modified (3'-nitrotyrosine). Position 80 is a phosphoserine (S80). The active-site Electrophile is the H96. The residue at position 106 (S106) is a Phosphoserine. A Glycyl lysine isopeptide (Lys-Gly) (interchain with G-Cter in SUMO1) cross-link involves residue K142. K149 is subject to N6-succinyllysine. At K156 the chain carries N6-acetyllysine; alternate. K156 bears the N6-succinyllysine; alternate mark. S159 is subject to Phosphoserine. E166 (proton acceptor) is an active-site residue. At T173 the chain carries Phosphothreonine. Residue K194 is modified to N6-acetyllysine; alternate. The residue at position 194 (K194) is an N6-succinyllysine; alternate. Residue K194 is modified to N6-methyllysine; alternate. The residue at position 198 (S198) is a Phosphoserine. Position 209 is a 3'-nitrotyrosine (Y209). Position 212 is a phosphoserine (S212). Phosphothreonine is present on T214. Position 223 is a phosphoserine (S223). Position 238 is an N6-acetyllysine (K238).

It belongs to the triosephosphate isomerase family. In terms of assembly, homodimer.

It is found in the cytoplasm. It catalyses the reaction dihydroxyacetone phosphate = methylglyoxal + phosphate. The catalysed reaction is D-glyceraldehyde 3-phosphate = dihydroxyacetone phosphate. The protein operates within carbohydrate degradation; glycolysis; D-glyceraldehyde 3-phosphate from glycerone phosphate: step 1/1. It participates in carbohydrate biosynthesis; gluconeogenesis. Functionally, triosephosphate isomerase is an extremely efficient metabolic enzyme that catalyzes the interconversion between dihydroxyacetone phosphate (DHAP) and D-glyceraldehyde-3-phosphate (G3P) in glycolysis and gluconeogenesis. In terms of biological role, it is also responsible for the non-negligible production of methylglyoxal a reactive cytotoxic side-product that modifies and can alter proteins, DNA and lipids. This Macaca fascicularis (Crab-eating macaque) protein is Triosephosphate isomerase (TPI1).